The sequence spans 296 residues: Ribosomal RNA small subunit methyltransferase A (296 aa).

Positions 32, 34, 59, 80, 105, and 130 each coordinate S-adenosyl-L-methionine.

Belongs to the class I-like SAM-binding methyltransferase superfamily. rRNA adenine N(6)-methyltransferase family. RsmA subfamily.

Its subcellular location is the cytoplasm. The enzyme catalyses adenosine(1518)/adenosine(1519) in 16S rRNA + 4 S-adenosyl-L-methionine = N(6)-dimethyladenosine(1518)/N(6)-dimethyladenosine(1519) in 16S rRNA + 4 S-adenosyl-L-homocysteine + 4 H(+). Its function is as follows. Specifically dimethylates two adjacent adenosines (A1518 and A1519) in the loop of a conserved hairpin near the 3'-end of 16S rRNA in the 30S particle. May play a critical role in biogenesis of 30S subunits. In Levilactobacillus brevis (strain ATCC 367 / BCRC 12310 / CIP 105137 / JCM 1170 / LMG 11437 / NCIMB 947 / NCTC 947) (Lactobacillus brevis), this protein is Ribosomal RNA small subunit methyltransferase A.